Reading from the N-terminus, the 1018-residue chain is Importin-9 (1018 aa).

An Importin N-terminal domain is found at threonine 35–aspartate 114. The interval glycine 921 to serine 950 is disordered. Residues proline 926 to alanine 939 are compositionally biased toward acidic residues.

It belongs to the importin beta family.

Its subcellular location is the cytoplasm. It is found in the nucleus. Its function is as follows. Nuclear transport receptor that mediates nuclear import of proteins. Serves as receptor for nuclear localization signals (NLS) in cargo substrates. Is thought to mediate docking of the importin/substrate complex to the nuclear pore complex (NPC) through binding to nucleoporin and the complex is subsequently translocated through the pore by an energy requiring, Ran-dependent mechanism. Mediates the import of pre-assembled proteasomes into the nucleus during the late stages of sperm development. This Drosophila melanogaster (Fruit fly) protein is Importin-9.